Reading from the N-terminus, the 408-residue chain is Two-pore potassium channel 5 (408 aa).

Disordered regions lie at residues 1–29 (MEPLISPQPRFRLQPIPENPSSSSSSASI) and 58–82 (QSVQDDKEDQDSDSDETNRFLSQTR). Positions 15–29 (PIPENPSSSSSSASI) are enriched in low complexity. At 22–115 (SSSSSASITI…TKKPSPVSKS (94 aa)) the chain is on the stromal side. Positions 63 to 72 (DKEDQDSDSD) are enriched in acidic residues. A helical transmembrane segment spans residues 116–136 (IIRQAIFLLIVYLTLGVSIYS). Positions 152-171 (DALYFCIVTMCTIGYGDIAP) form an intramembrane region, pore-forming. Residues 178–198 (IFAVVFVLFGFGFLDILLSGV) traverse the membrane as a helical segment. The Stromal segment spans residues 199 to 248 (VNYVLDLQESMILTGIQTRQHHQHHHHHRFSAKDYIIDFEKGRMRIRMKV). Residues 249 to 269 (CLALCVVVLCIGVGALVLHFV) traverse the membrane as a helical segment. Positions 276-295 (DSVYLSVMSVTTVGYGDRAF) form an intramembrane region, pore-forming. A helical membrane pass occupies residues 302-322 (LFAAVWLLVSTLAVARAFLYL). The Stromal segment spans residues 323-408 (AEARIDRRHR…TLPDLLGDPL (86 aa)). EF-hand domains follow at residues 339–374 (LNREITVDDLLKADTYQHGFISKSEYIVLKLKEMGK) and 378–408 (KDIDQVVIQFEKLDPNQIGKITLPDLLGDPL). Ca(2+) contacts are provided by D352, E363, D391, N393, K397, and D402.

Belongs to the two pore domain potassium channel (TC 1.A.1.7) family. As to quaternary structure, homodimer. Expressed in hydathodes and the vascular tissues of roots, stems, leaves and flowers.

The protein resides in the vacuole membrane. Its function is as follows. Probable voltage-independent potassium-selective tonoplast ion channel. The chain is Two-pore potassium channel 5 (TPK5) from Arabidopsis thaliana (Mouse-ear cress).